A 157-amino-acid chain; its full sequence is Transcription antitermination protein NusB (157 aa).

It belongs to the NusB family.

Functionally, involved in transcription antitermination. Required for transcription of ribosomal RNA (rRNA) genes. Binds specifically to the boxA antiterminator sequence of the ribosomal RNA (rrn) operons. The protein is Transcription antitermination protein NusB of Helicobacter hepaticus (strain ATCC 51449 / 3B1).